We begin with the raw amino-acid sequence, 202 residues long: Holliday junction branch migration complex subunit RuvA (202 aa).

The interval 1 to 64 (MIGRLRGTLA…EDAQLLYGFA (64 aa)) is domain I. A domain II region spans residues 65–143 (GKRERDFFRE…AWETSPAMFA (79 aa)). The interval 144-154 (LVPNQPDGPAP) is flexible linker. The segment at 154-202 (PVNTAENDAVSALISLGYKPQEASKAISAIKEKGLSSEDMIRRALKGMI) is domain III.

This sequence belongs to the RuvA family. Homotetramer. Forms an RuvA(8)-RuvB(12)-Holliday junction (HJ) complex. HJ DNA is sandwiched between 2 RuvA tetramers; dsDNA enters through RuvA and exits via RuvB. An RuvB hexamer assembles on each DNA strand where it exits the tetramer. Each RuvB hexamer is contacted by two RuvA subunits (via domain III) on 2 adjacent RuvB subunits; this complex drives branch migration. In the full resolvosome a probable DNA-RuvA(4)-RuvB(12)-RuvC(2) complex forms which resolves the HJ.

It localises to the cytoplasm. The RuvA-RuvB-RuvC complex processes Holliday junction (HJ) DNA during genetic recombination and DNA repair, while the RuvA-RuvB complex plays an important role in the rescue of blocked DNA replication forks via replication fork reversal (RFR). RuvA specifically binds to HJ cruciform DNA, conferring on it an open structure. The RuvB hexamer acts as an ATP-dependent pump, pulling dsDNA into and through the RuvAB complex. HJ branch migration allows RuvC to scan DNA until it finds its consensus sequence, where it cleaves and resolves the cruciform DNA. The polypeptide is Holliday junction branch migration complex subunit RuvA (Pseudomonas fluorescens (strain Pf0-1)).